A 160-amino-acid polypeptide reads, in one-letter code: Cytochrome b6-f complex subunit 4 (160 aa).

The next 3 membrane-spanning stretches (helical) occupy residues 36–56, 95–115, and 131–151; these read LLYT…GLAV, LLGV…PFIE, and TVFL…TLPI.

This sequence belongs to the cytochrome b family. PetD subfamily. As to quaternary structure, the 4 large subunits of the cytochrome b6-f complex are cytochrome b6, subunit IV (17 kDa polypeptide, petD), cytochrome f and the Rieske protein, while the 4 small subunits are petG, petL, petM and petN. The complex functions as a dimer.

The protein localises to the plastid. It localises to the chloroplast thylakoid membrane. In terms of biological role, component of the cytochrome b6-f complex, which mediates electron transfer between photosystem II (PSII) and photosystem I (PSI), cyclic electron flow around PSI, and state transitions. This is Cytochrome b6-f complex subunit 4 from Mesostigma viride (Green alga).